A 235-amino-acid polypeptide reads, in one-letter code: Glucosamine-6-phosphate deaminase (235 aa).

The Proton acceptor; for enolization step role is filled by D62. N128 serves as the catalytic For ring-opening step. Residue H130 is the Proton acceptor; for ring-opening step of the active site. E135 serves as the catalytic For ring-opening step.

Belongs to the glucosamine/galactosamine-6-phosphate isomerase family. NagB subfamily.

The enzyme catalyses alpha-D-glucosamine 6-phosphate + H2O = beta-D-fructose 6-phosphate + NH4(+). It functions in the pathway amino-sugar metabolism; N-acetylneuraminate degradation; D-fructose 6-phosphate from N-acetylneuraminate: step 5/5. Functionally, catalyzes the reversible isomerization-deamination of glucosamine 6-phosphate (GlcN6P) to form fructose 6-phosphate (Fru6P) and ammonium ion. The sequence is that of Glucosamine-6-phosphate deaminase from Streptococcus gordonii (strain Challis / ATCC 35105 / BCRC 15272 / CH1 / DL1 / V288).